Here is a 287-residue protein sequence, read N- to C-terminus: U-megalopygitoxin(8)-Mc8 (287 aa).

A signal peptide spans 1 to 17; that stretch reads MYLQYLVLSLFSTTVYG.

Belongs to the caterpillar 8 family. In terms of processing, contains 2 disulfide bonds. In terms of tissue distribution, expressed by the venom apparatus.

The protein localises to the secreted. Functionally, probable toxin. In Megalopyge crispata (Black-waved flannel moth), this protein is U-megalopygitoxin(8)-Mc8.